The sequence spans 155 residues: Protein FAM162A (155 aa).

A required for proapoptotic activity region spans residues 77-103 (RFKKEEEIPETISFEMLDAAKNKIRVK). Residues 102 to 121 (VKVSYLMIALTVAGCVYMVI) form a helical membrane-spanning segment.

This sequence belongs to the UPF0389 family. Interacts with HSP90AB1; HSP90AB1 is essential for FAM162A mitochondrial localization and pro-apoptotic activity. Interacts with VDAC2; the interaction is probably involved in inducing mitochondrial permeability transition.

Its subcellular location is the mitochondrion membrane. Its function is as follows. Proposed to be involved in regulation of apoptosis; the exact mechanism may differ between cell types/tissues. May be involved in hypoxia-induced cell death of transformed cells implicating cytochrome C release and caspase activation (such as CASP9) and inducing mitochondrial permeability transition. May be involved in hypoxia-induced cell death of neuronal cells probably by promoting release of AIFM1 from mitochondria to cytoplasm and its translocation to the nucleus; however, the involvement of caspases has been reported conflictingly. This chain is Protein FAM162A (Fam162a), found in Rattus norvegicus (Rat).